Consider the following 801-residue polypeptide: U-box domain-containing protein 44 (801 aa).

One can recognise a U-box domain in the interval His-22–Ala-101. 9 ARM repeats span residues Arg-134–Glu-173, Asp-176–Lys-215, Ala-218–Arg-259, Glu-261–Leu-300, Asn-301–Ser-340, Glu-342–Asn-386, Asp-390–Ser-429, Pro-435–Pro-475, and Glu-480–Asp-521.

As to quaternary structure, interacts with AAO3. Binds to SD129. As to expression, expressed in leaves, root vasculature and guard cells.

It carries out the reaction S-ubiquitinyl-[E2 ubiquitin-conjugating enzyme]-L-cysteine + [acceptor protein]-L-lysine = [E2 ubiquitin-conjugating enzyme]-L-cysteine + N(6)-ubiquitinyl-[acceptor protein]-L-lysine.. The protein operates within protein modification; protein ubiquitination. Functions as an E3 ubiquitin-protein ligase. Prevents premature senescence probably by targeting proteins involved in this process for degradation. Promotes the degradation of AAO3 and thus represses abscisic acid (ABA) biosynthesis. The polypeptide is U-box domain-containing protein 44 (PUB44) (Arabidopsis thaliana (Mouse-ear cress)).